Here is a 458-residue protein sequence, read N- to C-terminus: Elongation factor 1-alpha (458 aa).

Glycine 2 is subject to N,N,N-trimethylglycine; by EFM7. An N6,N6-dimethyllysine; by EFM7; alternate modification is found at lysine 3. Lysine 3 bears the N6-methyllysine; by EFM7; alternate mark. Residues 5 to 240 (KSHINVVVIG…DAIEQPSRPT (236 aa)) form the tr-type G domain. Residues 14–21 (GHVDSGKS) form a G1 region. Serine 18 carries the post-translational modification Phosphoserine. GTP-binding residues include serine 21 and threonine 22. Lysine 30 is modified (N6-methyllysine; by EFM1). The G2 stretch occupies residues 70 to 74 (GITID). Threonine 72 is subject to Phosphothreonine. Lysine 79 is modified (N6,N6,N6-trimethyllysine; by EFM5). At threonine 82 the chain carries Phosphothreonine. A G3 region spans residues 91-94 (DAPG). Positions 153, 154, and 156 each coordinate GTP. The G4 stretch occupies residues 153–156 (NKMD). The residue at position 163 (serine 163) is a Phosphoserine. The GTP site is built by serine 192, glycine 193, and tryptophan 194. The G5 stretch occupies residues 192–194 (SGW). Residues lysine 224, lysine 242, and lysine 253 each participate in a glycyl lysine isopeptide (Lys-Gly) (interchain with G-Cter in ubiquitin) cross-link. At threonine 259 the chain carries Phosphothreonine. Lysine 271 participates in a covalent cross-link: Glycyl lysine isopeptide (Lys-Gly) (interchain with G-Cter in ubiquitin). At serine 289 the chain carries Phosphoserine. At lysine 316 the chain carries N6,N6-dimethyllysine; by EFM4; alternate. Lysine 316 bears the N6-methyllysine; by EFM4; alternate mark. At lysine 390 the chain carries N6-methyllysine; by EFM6. Residue lysine 393 forms a Glycyl lysine isopeptide (Lys-Gly) (interchain with G-Cter in ubiquitin) linkage. Phosphoserine is present on serine 414. Position 430 is a phosphothreonine (threonine 430). Lysine 437 is covalently cross-linked (Glycyl lysine isopeptide (Lys-Gly) (interchain with G-Cter in ubiquitin)). At lysine 458 the chain carries Lysine methyl ester.

The protein belongs to the TRAFAC class translation factor GTPase superfamily. Classic translation factor GTPase family. EF-Tu/EF-1A subfamily. In terms of assembly, the eukaryotic elongation factor 1 complex (eEF1) is probably a heterohexamer. Two trimeric complexes, each composed of eEF1A (TEF1 or TEF2), eEF1Balpha (EFB1) and eEF1Bgamma (CAM1 or TEF4), are probably dimerized via the eF1Bgamma subunits. Interacts with eEF1Balpha; the interaction is direct. Interacts with GCN2 (via C-terminus); this interaction is direct, occurs in amino acid-repleted cells, may be stabilized in a ribosome-dependent manner, reduces GCN2-mediated eIF-2-alpha phosphorylation and is lost in amino acid-starved cells and by uncharged tRNAs. Interacts with CEX1. Interacts with elongation factor 3 (YEF3 or HEF3). Interacts with NAP1. Interacts with SRV2. Interacts with chaperone ZPR1; the interaction is required for its proper folding. Binds to actin and forms a ternary complex with BNI1 and profilin. Interacts with the proteasome, probably via RPT1. Associates with ribosomes. S-thiolated in response to oxidative stress, probably inhibiting the protein and causing a reduction in protein synthesis. Post-translationally, glutaminylated at Glu-45. An L-glutamine is linked to Glu-45 via the alpha amino group. This glutaminylation is yeast-specific and not essential for the normal functions of eEF1A. However, eEF1A glutaminylation slightly reduced growth under antibiotic-induced translational stress conditions.

Its subcellular location is the cytoplasm. The protein resides in the cytoskeleton. The protein operates within protein biosynthesis; polypeptide chain elongation. Its activity is regulated as follows. Inhibited by narciclasine. Its function is as follows. GTP-binding component of the eukaryotic elongation factor 1 complex (eEF1). In its active GTP-bound form, binds to and delivers aminoacyl-tRNA to the A-site of ribosomes during protein biosynthesis. In the presence of a correct codon-anticodon match between the aminoacyl-tRNA and the A-site codon of the ribosome-bound mRNA, the ribosome acts as a GTPase activator and the GTP is hydrolyzed. The inactive GDP-bound form leaves the ribosome and must be recycled by its guanine nucleotide exchange factor (GEF) (eEF1B subcomplex) before binding another molecule of aminoacyl-tRNA. Required for nuclear export of aminoacyl-tRNAs. May also be involved in translational quality control by targeting cotranslationally damaged proteins to the proteasome. Also exhibits actin filament-binding and -bundling activities and is involved in cytoskeleton organization. Plays a role as a negative regulator of GCN2 kinase activity by inhibiting GCN2-mediated eIF-2-alpha phosphorylation in amino acid-repleted cells. The protein is Elongation factor 1-alpha (TEF1) of Saccharomyces cerevisiae (strain ATCC 204508 / S288c) (Baker's yeast).